The primary structure comprises 370 residues: Aminomethyltransferase (370 aa).

It belongs to the GcvT family. The glycine cleavage system is composed of four proteins: P, T, L and H.

It catalyses the reaction N(6)-[(R)-S(8)-aminomethyldihydrolipoyl]-L-lysyl-[protein] + (6S)-5,6,7,8-tetrahydrofolate = N(6)-[(R)-dihydrolipoyl]-L-lysyl-[protein] + (6R)-5,10-methylene-5,6,7,8-tetrahydrofolate + NH4(+). Functionally, the glycine cleavage system catalyzes the degradation of glycine. The protein is Aminomethyltransferase of Leptospira biflexa serovar Patoc (strain Patoc 1 / Ames).